A 304-amino-acid polypeptide reads, in one-letter code: Virulence protein VirA (304 aa).

Functionally, could be involved in the biosynthesis of a major surface antigen important for virulence. This is Virulence protein VirA (virA) from Vibrio anguillarum (strain ATCC 68554 / 775) (Listonella anguillarum).